A 168-amino-acid chain; its full sequence is Zinc finger A20 and AN1 domain-containing stress-associated protein 1 (168 aa).

The A20-type zinc-finger motif lies at 13 to 47; the sequence is PSEPKLCVKGCGFFGSPSNMNLCSKCYRDIRATEE. 4 residues coordinate Zn(2+): Cys-19, Cys-23, Cys-35, and Cys-38. The segment at 49 to 105 is disordered; the sequence is TASAKAAVEKSLNPNKPKTQPQQSQEITQGVLGSGSSSSSTRGGDSAAAPLDPPKST. Positions 60–76 are enriched in polar residues; it reads LNPNKPKTQPQQSQEIT. Residues 82-94 are compositionally biased toward low complexity; sequence SGSSSSSTRGGDS. The AN1-type zinc-finger motif lies at 103-149; sequence KSTATRCLSCNKKVGVTGFKCRCGSTFCGTHRYPESHECQFDFKGVA. 8 residues coordinate Zn(2+): Cys-109, Cys-112, Cys-123, Cys-125, Cys-130, His-133, His-139, and Cys-141.

May be involved in environmental stress response. The chain is Zinc finger A20 and AN1 domain-containing stress-associated protein 1 (SAP1) from Arabidopsis thaliana (Mouse-ear cress).